The sequence spans 135 residues: Transcription antitermination protein NusB (135 aa).

Belongs to the NusB family.

Its function is as follows. Involved in transcription antitermination. Required for transcription of ribosomal RNA (rRNA) genes. Binds specifically to the boxA antiterminator sequence of the ribosomal RNA (rrn) operons. This chain is Transcription antitermination protein NusB, found in Clostridium perfringens (strain SM101 / Type A).